The primary structure comprises 1188 residues: Zinc finger SWIM domain-containing protein 5 (1188 aa).

Basic and acidic residues predominate over residues 1 to 10; it reads MAEGGEREEL. Disordered stretches follow at residues 1-46 and 123-171; these read MAEG…GAGG and AGAA…TGTA. Low complexity-rich tracts occupy residues 126-136 and 146-155; these read AAGAAGASPVE and AAPAGSAPGA. Over residues 156–171 the composition is skewed to gly residues; sequence AGAGSSPGLGAGTGTA. The segment at 222–259 adopts an SWIM-type zinc-finger fold; it reads YKVAISFDRCKITSVSCGCGNKDIFYCAHVVALSLYRI.

The polypeptide is Zinc finger SWIM domain-containing protein 5 (Zswim5) (Mus musculus (Mouse)).